A 193-amino-acid chain; its full sequence is uncharacterized protein (193 aa).

This is an uncharacterized protein from Bacillus subtilis (strain 168).